We begin with the raw amino-acid sequence, 207 residues long: ATP synthase subunit b 2 (207 aa).

Low complexity predominate over residues 1–31; it reads MVAQAAPPAGTAGQGTHEAASAAHGAAAAHG. Positions 1-41 are disordered; the sequence is MVAQAAPPAGTAGQGTHEAASAAHGAAAAHGAAEEGHGKKS. The helical transmembrane segment at 48–70 threads the bilayer; it reads ATTFASQLLWLVLSFGLLYLLMS.

It belongs to the ATPase B chain family. As to quaternary structure, F-type ATPases have 2 components, F(1) - the catalytic core - and F(0) - the membrane proton channel. F(1) has five subunits: alpha(3), beta(3), gamma(1), delta(1), epsilon(1). F(0) has three main subunits: a(1), b(2) and c(10-14). The alpha and beta chains form an alternating ring which encloses part of the gamma chain. F(1) is attached to F(0) by a central stalk formed by the gamma and epsilon chains, while a peripheral stalk is formed by the delta and b chains.

The protein localises to the cell inner membrane. In terms of biological role, f(1)F(0) ATP synthase produces ATP from ADP in the presence of a proton or sodium gradient. F-type ATPases consist of two structural domains, F(1) containing the extramembraneous catalytic core and F(0) containing the membrane proton channel, linked together by a central stalk and a peripheral stalk. During catalysis, ATP synthesis in the catalytic domain of F(1) is coupled via a rotary mechanism of the central stalk subunits to proton translocation. Functionally, component of the F(0) channel, it forms part of the peripheral stalk, linking F(1) to F(0). This chain is ATP synthase subunit b 2, found in Xanthobacter autotrophicus (strain ATCC BAA-1158 / Py2).